Here is a 1703-residue protein sequence, read N- to C-terminus: Arf-GAP with Rho-GAP domain, ANK repeat and PH domain-containing protein 2 (1703 aa).

Residues 6–70 (EVNADIRDFL…LKQLQMIFSK (65 aa)) form the SAM domain. A Phosphotyrosine modification is found at Y77. Disordered stretches follow at residues 84-132 (KNGS…LSEG), 191-232 (EEHT…NGTN), and 286-319 (PVPE…LTLK). 3 stretches are compositionally biased toward polar residues: residues 85–103 (NGST…STHT), 123–132 (MVTTSTLSEG), and 197–214 (GNLT…NTEC). Residues 222-232 (TSGTHSGNGTN) show a composition bias toward low complexity. Residues 308–319 (NTTSAGKSLTLK) are compositionally biased toward polar residues. 2 consecutive PH domains span residues 480–572 (AKEK…SALK) and 585–677 (APEK…QSIA). Positions 674–809 (QSIAETLSDY…TLLASLTKEE (136 aa)) constitute an Arf-GAP domain. Residues 698-721 (CADCKAPDPDWASINLCVVICKKC) form a C4-type zinc finger. 2 PH domains span residues 899 to 1001 (QTAA…KRFV) and 1012 to 1110 (DYDL…KAAG). Residues 1114 to 1295 (NALQDQQLCK…DLINNYVEIF (182 aa)) form the Rho-GAP domain. Residues 1324–1418 (GDLLIEVFVE…AYLVVKRFLT (95 aa)) enclose the Ras-associating domain. In terms of domain architecture, PH 5 spans 1428 to 1531 (KSIKEGILKL…WMASIFIAQH (104 aa)). At S1627 the chain carries Phosphoserine. 2 disordered regions span residues 1633-1670 (DTEA…DPKL) and 1684-1703 (RSRP…KEVK). Basic and acidic residues-rich tracts occupy residues 1653–1670 (KKTE…DPKL) and 1688–1703 (LHKE…KEVK).

Its subcellular location is the cytoplasm. In terms of biological role, phosphatidylinositol 3,4,5-trisphosphate-dependent GTPase-activating protein that modulates actin cytoskeleton remodeling by regulating ARF and RHO family members. Is activated by phosphatidylinositol 3,4,5-trisphosphate (PtdIns(3,4,5)P3) binding. Can be activated by phosphatidylinositol 3,4-bisphosphate (PtdIns(3,4,5)P2) binding, albeit with lower efficiency. This Mus musculus (Mouse) protein is Arf-GAP with Rho-GAP domain, ANK repeat and PH domain-containing protein 2 (Arap2).